Consider the following 394-residue polypeptide: F-box protein At2g17830 (394 aa).

One can recognise an F-box domain in the interval Met1–Gln47.

The protein is F-box protein At2g17830 of Arabidopsis thaliana (Mouse-ear cress).